Reading from the N-terminus, the 197-residue chain is MFDQLVLASNNAGKLKEFGALFAELGVTVRPQRDFDVPECPEPHHTFLENALEKARHASRLTGLPALADDSGICVEALGGAPGVFSARFAGEPKSDARNNALLVEKLQGEANRRAWYYCVLVLVRHADDPQPLVADGIWLGEVRDEAAGEGGFGYDPHFHLPGYGVSVAELDAAEKNRVSHRGQALAALMAKLKALA.

Residue 9–14 (SNNAGK) participates in substrate binding. Asp70 functions as the Proton acceptor in the catalytic mechanism. Mg(2+) is bound at residue Asp70. Substrate contacts are provided by residues Ser71, 153 to 156 (FGYD), Lys176, and 181 to 182 (HR).

This sequence belongs to the HAM1 NTPase family. As to quaternary structure, homodimer. Mg(2+) serves as cofactor.

The enzyme catalyses XTP + H2O = XMP + diphosphate + H(+). It catalyses the reaction dITP + H2O = dIMP + diphosphate + H(+). The catalysed reaction is ITP + H2O = IMP + diphosphate + H(+). In terms of biological role, pyrophosphatase that catalyzes the hydrolysis of nucleoside triphosphates to their monophosphate derivatives, with a high preference for the non-canonical purine nucleotides XTP (xanthosine triphosphate), dITP (deoxyinosine triphosphate) and ITP. Seems to function as a house-cleaning enzyme that removes non-canonical purine nucleotides from the nucleotide pool, thus preventing their incorporation into DNA/RNA and avoiding chromosomal lesions. The protein is dITP/XTP pyrophosphatase of Chromobacterium violaceum (strain ATCC 12472 / DSM 30191 / JCM 1249 / CCUG 213 / NBRC 12614 / NCIMB 9131 / NCTC 9757 / MK).